The chain runs to 783 residues: Endonuclease MutS2 (783 aa).

An ATP-binding site is contributed by 328–335 (GPNTGGKT). The 76-residue stretch at 708–783 (LDLRGKRYEE…GSGCTIATLG (76 aa)) folds into the Smr domain.

Belongs to the DNA mismatch repair MutS family. MutS2 subfamily. As to quaternary structure, homodimer. Binds to stalled ribosomes, contacting rRNA.

Functionally, endonuclease that is involved in the suppression of homologous recombination and thus may have a key role in the control of bacterial genetic diversity. Its function is as follows. Acts as a ribosome collision sensor, splitting the ribosome into its 2 subunits. Detects stalled/collided 70S ribosomes which it binds and splits by an ATP-hydrolysis driven conformational change. Acts upstream of the ribosome quality control system (RQC), a ribosome-associated complex that mediates the extraction of incompletely synthesized nascent chains from stalled ribosomes and their subsequent degradation. Probably generates substrates for RQC. In Streptococcus thermophilus (strain ATCC BAA-250 / LMG 18311), this protein is Endonuclease MutS2.